Consider the following 342-residue polypeptide: Oxygen-dependent coproporphyrinogen-III oxidase (342 aa).

Serine 98 provides a ligand contact to substrate. A divalent metal cation is bound by residues histidine 102 and histidine 112. Catalysis depends on histidine 112, which acts as the Proton donor. 114-116 (NYR) is a substrate binding site. 2 residues coordinate a divalent metal cation: histidine 146 and histidine 176. Residues 266-301 (YVEFNLVWDRGTIFGLQTNGRTESILMSLPPLARWE) are important for dimerization.

It belongs to the aerobic coproporphyrinogen-III oxidase family. Homodimer. A divalent metal cation is required as a cofactor.

Its subcellular location is the cytoplasm. It carries out the reaction coproporphyrinogen III + O2 + 2 H(+) = protoporphyrinogen IX + 2 CO2 + 2 H2O. It functions in the pathway porphyrin-containing compound metabolism; protoporphyrin-IX biosynthesis; protoporphyrinogen-IX from coproporphyrinogen-III (O2 route): step 1/1. In terms of biological role, involved in the heme and chlorophyll biosynthesis. Catalyzes the aerobic oxidative decarboxylation of propionate groups of rings A and B of coproporphyrinogen-III to yield the vinyl groups in protoporphyrinogen-IX. The protein is Oxygen-dependent coproporphyrinogen-III oxidase of Prochlorococcus marinus subsp. pastoris (strain CCMP1986 / NIES-2087 / MED4).